A 565-amino-acid polypeptide reads, in one-letter code: Arginine--tRNA ligase (565 aa).

The 'HIGH' region signature appears at 121–131 (PNIAKPMGMGH).

The protein belongs to the class-I aminoacyl-tRNA synthetase family. In terms of assembly, monomer.

The protein localises to the cytoplasm. The catalysed reaction is tRNA(Arg) + L-arginine + ATP = L-arginyl-tRNA(Arg) + AMP + diphosphate. The chain is Arginine--tRNA ligase from Lactobacillus delbrueckii subsp. bulgaricus (strain ATCC BAA-365 / Lb-18).